The chain runs to 197 residues: Holliday junction branch migration complex subunit RuvA (197 aa).

Residues 1–64 (MIASIRGILI…EDSLTLYGFE (64 aa)) form a domain I region. The tract at residues 65 to 145 (TVEQRQLFET…GLPTGAAVTP (81 aa)) is domain II. Residues 146-148 (AVA) are flexible linker. Residues 148–197 (AAANAELSEALISLGFTDAEAAAAIAALPSDAPPDLEERVRLALRYFSAS) form a domain III region.

The protein belongs to the RuvA family. As to quaternary structure, homotetramer. Forms an RuvA(8)-RuvB(12)-Holliday junction (HJ) complex. HJ DNA is sandwiched between 2 RuvA tetramers; dsDNA enters through RuvA and exits via RuvB. An RuvB hexamer assembles on each DNA strand where it exits the tetramer. Each RuvB hexamer is contacted by two RuvA subunits (via domain III) on 2 adjacent RuvB subunits; this complex drives branch migration. In the full resolvosome a probable DNA-RuvA(4)-RuvB(12)-RuvC(2) complex forms which resolves the HJ.

It localises to the cytoplasm. Its function is as follows. The RuvA-RuvB-RuvC complex processes Holliday junction (HJ) DNA during genetic recombination and DNA repair, while the RuvA-RuvB complex plays an important role in the rescue of blocked DNA replication forks via replication fork reversal (RFR). RuvA specifically binds to HJ cruciform DNA, conferring on it an open structure. The RuvB hexamer acts as an ATP-dependent pump, pulling dsDNA into and through the RuvAB complex. HJ branch migration allows RuvC to scan DNA until it finds its consensus sequence, where it cleaves and resolves the cruciform DNA. The protein is Holliday junction branch migration complex subunit RuvA of Roseiflexus sp. (strain RS-1).